A 342-amino-acid chain; its full sequence is Holliday junction branch migration complex subunit RuvB (342 aa).

A large ATPase domain (RuvB-L) region spans residues 1–182 (MRIEALNTAP…FGINSRLDYY (182 aa)). ATP-binding positions include I21, R22, G63, K66, T67, T68, 129-131 (EDY), R172, Y182, and R219. A Mg(2+)-binding site is contributed by T67. Positions 183–253 (SPELLQSIIV…VARRTLESLE (71 aa)) are small ATPAse domain (RuvB-S). The interval 256 to 342 (EGGLDDMDKK…DHGPLFDHNS (87 aa)) is head domain (RuvB-H). Residues R311 and R316 each contribute to the DNA site.

Belongs to the RuvB family. Homohexamer. Forms an RuvA(8)-RuvB(12)-Holliday junction (HJ) complex. HJ DNA is sandwiched between 2 RuvA tetramers; dsDNA enters through RuvA and exits via RuvB. An RuvB hexamer assembles on each DNA strand where it exits the tetramer. Each RuvB hexamer is contacted by two RuvA subunits (via domain III) on 2 adjacent RuvB subunits; this complex drives branch migration. In the full resolvosome a probable DNA-RuvA(4)-RuvB(12)-RuvC(2) complex forms which resolves the HJ.

It is found in the cytoplasm. The enzyme catalyses ATP + H2O = ADP + phosphate + H(+). The RuvA-RuvB-RuvC complex processes Holliday junction (HJ) DNA during genetic recombination and DNA repair, while the RuvA-RuvB complex plays an important role in the rescue of blocked DNA replication forks via replication fork reversal (RFR). RuvA specifically binds to HJ cruciform DNA, conferring on it an open structure. The RuvB hexamer acts as an ATP-dependent pump, pulling dsDNA into and through the RuvAB complex. RuvB forms 2 homohexamers on either side of HJ DNA bound by 1 or 2 RuvA tetramers; 4 subunits per hexamer contact DNA at a time. Coordinated motions by a converter formed by DNA-disengaged RuvB subunits stimulates ATP hydrolysis and nucleotide exchange. Immobilization of the converter enables RuvB to convert the ATP-contained energy into a lever motion, pulling 2 nucleotides of DNA out of the RuvA tetramer per ATP hydrolyzed, thus driving DNA branch migration. The RuvB motors rotate together with the DNA substrate, which together with the progressing nucleotide cycle form the mechanistic basis for DNA recombination by continuous HJ branch migration. Branch migration allows RuvC to scan DNA until it finds its consensus sequence, where it cleaves and resolves cruciform DNA. This chain is Holliday junction branch migration complex subunit RuvB, found in Chlorobaculum parvum (strain DSM 263 / NCIMB 8327) (Chlorobium vibrioforme subsp. thiosulfatophilum).